Consider the following 379-residue polypeptide: UDP-4-amino-4-deoxy-L-arabinose--oxoglutarate aminotransferase (379 aa).

Lysine 182 carries the N6-(pyridoxal phosphate)lysine modification.

Belongs to the DegT/DnrJ/EryC1 family. ArnB subfamily. In terms of assembly, homodimer. The cofactor is pyridoxal 5'-phosphate.

The enzyme catalyses UDP-4-amino-4-deoxy-beta-L-arabinose + 2-oxoglutarate = UDP-beta-L-threo-pentopyranos-4-ulose + L-glutamate. The protein operates within nucleotide-sugar biosynthesis; UDP-4-deoxy-4-formamido-beta-L-arabinose biosynthesis; UDP-4-deoxy-4-formamido-beta-L-arabinose from UDP-alpha-D-glucuronate: step 2/3. It participates in bacterial outer membrane biogenesis; lipopolysaccharide biosynthesis. Functionally, catalyzes the conversion of UDP-4-keto-arabinose (UDP-Ara4O) to UDP-4-amino-4-deoxy-L-arabinose (UDP-L-Ara4N). The modified arabinose is attached to lipid A and is required for resistance to polymyxin and cationic antimicrobial peptides. This is UDP-4-amino-4-deoxy-L-arabinose--oxoglutarate aminotransferase from Enterobacter sp. (strain 638).